A 510-amino-acid chain; its full sequence is Gallate 1-beta-glucosyltransferase (510 aa).

H19 functions as the Proton acceptor in the catalytic mechanism. H19 lines the an anthocyanidin pocket. UDP-alpha-D-glucose is bound by residues Q343, H358, W361, N362, S363, and E366. G381 is a binding site for an anthocyanidin. UDP-alpha-D-glucose-binding residues include D382 and Q383.

The protein belongs to the UDP-glycosyltransferase family. In terms of tissue distribution, expressed in swelling buds and young leaves.

The catalysed reaction is 3,4,5-trihydroxybenzoate + UDP-alpha-D-glucose = 1-O-galloyl-beta-D-glucose + UDP. It catalyses the reaction vanillate + UDP-alpha-D-glucose = 1-O-(4-hydroxy-3-methoxybenzoyl)-beta-D-glucose + UDP. It carries out the reaction 3,4-dihydroxybenzoate + UDP-alpha-D-glucose = 1-O-(3,4-dihydroxy-benzoyl)-beta-D-glucose + UDP. Functionally, glucosyltransferase that catalyzes the formation of 1-O-beta-D-glucose esters with hydroxybenzoic acids as preferred glucosyl acceptors. Has the highest activity with 3,4-dihydroxybenzoate, vanillate and gallate in vitro. Gallate is the predicted native substrate of the enzyme, which thus catalyzes the formation of 1-O-galloyl-beta-D-glucose, the first committed step of gallotannin biosynthesis. This is Gallate 1-beta-glucosyltransferase from Quercus robur (English oak).